We begin with the raw amino-acid sequence, 1575 residues long: Ovochymase (1575 aa).

An N-terminal signal peptide occupies residues 1 to 19 (MIVTFVALALSCCTPQVTA). A Peptidase S1 1 domain is found at 36 to 280 (IVGGEMAKLG…YSSWIANYTQ (245 aa)). Cysteines 61 and 77 form a disulfide. Active-site charge relay system residues include His76 and Asp132. Cystine bridges form between Cys166–Cys233, Cys199–Cys212, and Cys223–Cys256. Ser227 serves as the catalytic Charge relay system. Residues Asn277 and Asn303 are each glycosylated (N-linked (GlcNAc...) asparagine). 4 disulfides stabilise this stretch: Cys300/Cys330, Cys358/Cys386, Cys432/Cys460, and Cys486/Cys507. 2 consecutive CUB domains span residues 300–423 (CSSN…FHAV) and 432–545 (CGGI…YYFS). Asn497, Asn513, and Asn549 each carry an N-linked (GlcNAc...) asparagine glycan. Residues 575 to 810 (IVNGDIAIAG…YIDWIIATAN (236 aa)) form the Peptidase S1 2 domain. Cys602 and Cys618 are disulfide-bonded. Catalysis depends on charge relay system residues His617 and Asp665. Intrachain disulfides connect Cys700–Cys766, Cys730–Cys745, and Cys756–Cys786. Residue Asn748 is glycosylated (N-linked (GlcNAc...) asparagine). Ser760 serves as the catalytic Charge relay system. The N-linked (GlcNAc...) asparagine glycan is linked to Asn810. Disulfide bonds link Cys830–Cys859, Cys889–Cys913, Cys956–Cys984, Cys1012–Cys1034, Cys1080–Cys1108, Cys1135–Cys1158, and Cys1221–Cys1246. CUB domains follow at residues 830 to 949 (CIQL…YRLE), 956 to 1070 (CGQL…FVEL), 1080 to 1197 (CGGV…YTAV), and 1221 to 1341 (CQDS…YKLM). Asn968, Asn1027, Asn1087, and Asn1090 each carry an N-linked (GlcNAc...) asparagine glycan. Asn1273 is a glycosylation site (N-linked (GlcNAc...) asparagine). The region spanning 1314–1575 (YNGGEISMLF…FLKWITKIIQ (262 aa)) is the Peptidase S1 3 domain. 2 disulfide bridges follow: Cys1376/Cys1392 and Cys1493/Cys1507. Asn1511 carries an N-linked (GlcNAc...) asparagine glycan.

Belongs to the peptidase S1 family. As to expression, expressed in the testis and ovary. Expressed in the gonads and gametes. Expressed in the follicle cells covering the vitelline coat of ovarian egg.

It localises to the secreted. In terms of biological role, may be responsible for elevation of the vitelline coat at the late developmental stage of oogenesis and during fertilization in ovarian eggs. This Halocynthia roretzi (Sea squirt) protein is Ovochymase.